Here is a 393-residue protein sequence, read N- to C-terminus: Formate-dependent phosphoribosylglycinamide formyltransferase (393 aa).

N(1)-(5-phospho-beta-D-ribosyl)glycinamide contacts are provided by residues 22-23 (EL) and E82. Residues R114, K155, 160-165 (SSGKGQ), 195-198 (EGFI), and E203 contribute to the ATP site. The ATP-grasp domain occupies 119 to 308 (RLAAEELGLP…EFALHARAIL (190 aa)). Mg(2+)-binding residues include E267 and E279. Residues D286, K356, and 363–364 (RR) contribute to the N(1)-(5-phospho-beta-D-ribosyl)glycinamide site.

Belongs to the PurK/PurT family. In terms of assembly, homodimer.

It carries out the reaction N(1)-(5-phospho-beta-D-ribosyl)glycinamide + formate + ATP = N(2)-formyl-N(1)-(5-phospho-beta-D-ribosyl)glycinamide + ADP + phosphate + H(+). Its pathway is purine metabolism; IMP biosynthesis via de novo pathway; N(2)-formyl-N(1)-(5-phospho-D-ribosyl)glycinamide from N(1)-(5-phospho-D-ribosyl)glycinamide (formate route): step 1/1. Functionally, involved in the de novo purine biosynthesis. Catalyzes the transfer of formate to 5-phospho-ribosyl-glycinamide (GAR), producing 5-phospho-ribosyl-N-formylglycinamide (FGAR). Formate is provided by PurU via hydrolysis of 10-formyl-tetrahydrofolate. This chain is Formate-dependent phosphoribosylglycinamide formyltransferase, found in Azoarcus sp. (strain BH72).